A 270-amino-acid chain; its full sequence is Abhydrolase domain-containing protein C22H12.03 (270 aa).

The AB hydrolase-1 domain maps to 21 to 257; the sequence is PPVLIFHGLL…CGHWVHFEKP (237 aa). Residues Ser-95, Glu-190, and His-250 each act as charge relay system in the active site.

This sequence belongs to the AB hydrolase superfamily.

It is found in the mitochondrion. The protein is Abhydrolase domain-containing protein C22H12.03 of Schizosaccharomyces pombe (strain 972 / ATCC 24843) (Fission yeast).